Consider the following 323-residue polypeptide: D-specific alpha-keto acid dehydrogenase (323 aa).

NAD(+) is bound by residues 157–158 (HI), 230–232 (TGR), and Asp-256. The active site involves Arg-232. The active site involves Glu-261. Residue His-293 is the Proton donor of the active site. 293–296 (HTAY) lines the NAD(+) pocket.

The protein belongs to the D-isomer specific 2-hydroxyacid dehydrogenase family.

Required for high-level resistance to glycopeptides antibiotics. Catalyzes the reduction of 2-keto acids to 2-D-hydroxy acids that give rise to peptidoglycan precursors that terminate in the depsipeptide D-alanine-2-lactate rather than the dipeptide D-alanine-D-alanine thus preventing vancomycin binding. The chain is D-specific alpha-keto acid dehydrogenase (vanHB) from Enterococcus faecalis (strain ATCC 700802 / V583).